Here is a 306-residue protein sequence, read N- to C-terminus: Cytochrome P450 monooxygenase aclO (306 aa).

Residue Cys-237 coordinates heme.

It belongs to the cytochrome P450 family. It depends on heme as a cofactor.

It participates in mycotoxin biosynthesis. Its function is as follows. Cytochrome P450 monooxygenase; part of the gene cluster that mediates the biosynthesis of aspirochlorine (or antibiotic A30641), an unusual halogenated spiro compound with distinctive antifungal properties due to selective inhibition of protein biosynthesis, and which is also active against bacteria, viruses, and murine tumor cells. The non-ribosomal peptide synthetase (NRPS) aclP is responsible the formation of the diketopiperazine (DKP) core from the condensation of 2 phenylalanine residues. One Phe residue is tailored into chlorotyrosine by hydroxylation and chlorination, whereas the second Phe undergoes an unprecedented C-C bond cleavage to be converted into glycine. After formation of the DKP, sulfur is incorporated into the DKP by conjugation with glutathione by aclG, followed by its stepwise degradation to the thiol by aclI, aclJ and aclK, and the dithiol oxidation by aclT. In addition, oxygenases (aclB, aclC, aclL and aclO) and O-methyltransferases (aclM and aclU) act as tailoring enzymes to produce the intermediate dechloroaspirochlorine. Ultimately, chlorination of dechloroaspirochlorine by the halogenase aclH is the last step in the aspirochlorine pathway. The chain is Cytochrome P450 monooxygenase aclO from Aspergillus oryzae (strain ATCC 42149 / RIB 40) (Yellow koji mold).